Reading from the N-terminus, the 942-residue chain is DNA mismatch repair protein MSH2 (942 aa).

667–674 is a binding site for ATP; that stretch reads GPNMGGKS.

It belongs to the DNA mismatch repair MutS family. As to quaternary structure, heterodimer of MSH2 and MSH6 (GTBP).

It is found in the nucleus. Functionally, involved in postreplication mismatch repair. Binds specifically to DNA containing mismatched nucleotides thus providing a target for the excision repair processes characteristic of postreplication mismatch repair. In Zea mays (Maize), this protein is DNA mismatch repair protein MSH2 (MUS1).